The primary structure comprises 583 residues: Selenocysteine-specific elongation factor (583 aa).

Residues 5–203 (RVNVNVGVLG…LLKSQISIPT (199 aa)) form the tr-type G domain. The G1 stretch occupies residues 14–21 (GHIDSGKT). The GTP site is built by G19, T21, and A22. T21 contributes to the Mg(2+) binding site. A G2 region spans residues 46-50 (GITLD). Mg(2+) contacts are provided by T48 and D78. Residues 78–81 (DCPG) form a G3 region. A G4 region spans residues 132 to 135 (NKID). GTP-binding residues include D135 and K173. Residues 171–173 (AAK) are G5. Residues 371 to 390 (MPTATEGDDEADPKAGHAPG) form a disordered region. The residue at position 524 (S524) is a Phosphoserine. A disordered region spans residues 528-562 (KKILTPTLKKRSRAGRGETTKPEEGTERPEPIQPV). Position 532 is a phosphothreonine (T532). The short motif at 534 to 540 (TLKKRSR) is the Nuclear localization signal element. The segment covering 542–557 (GRGETTKPEEGTERPE) has biased composition (basic and acidic residues). R543 is subject to Omega-N-methylarginine.

The protein belongs to the TRAFAC class translation factor GTPase superfamily. Classic translation factor GTPase family. SelB subfamily. Requires Mg(2+) as cofactor. Mn(2+) is required as a cofactor.

It is found in the cytoplasm. It localises to the nucleus. The catalysed reaction is GTP + H2O = GDP + phosphate + H(+). In terms of biological role, translation factor required for the incorporation of the rare amino acid selenocysteine encoded by UGA codons. Replaces the eRF1-eRF3-GTP ternary complex for the insertion of selenocysteine directed by the UGA codon. Insertion of selenocysteine at UGA codons is mediated by SECISBP2 and EEFSEC: SECISBP2 (1) specifically binds the SECIS sequence once the 80S ribosome encounters an in-frame UGA codon and (2) contacts the RPS27A/eS31 of the 40S ribosome before ribosome stalling. (3) GTP-bound EEFSEC then delivers selenocysteinyl-tRNA(Sec) to the 80S ribosome and adopts a preaccommodated state conformation. (4) After GTP hydrolysis, EEFSEC dissociates from the assembly, selenocysteinyl-tRNA(Sec) accommodates, and peptide bond synthesis and selenoprotein elongation occur. This is Selenocysteine-specific elongation factor (Eefsec) from Mus musculus (Mouse).